Here is a 335-residue protein sequence, read N- to C-terminus: Holliday junction branch migration complex subunit RuvB (335 aa).

The tract at residues 1–181 is large ATPase domain (RuvB-L); it reads MERIVEVEKF…FGMHFRLQFY (181 aa). ATP contacts are provided by residues leucine 20, arginine 21, glycine 62, lysine 65, threonine 66, threonine 67, 128 to 130, arginine 171, tyrosine 181, and arginine 218; that span reads EDF. Position 66 (threonine 66) interacts with Mg(2+). Positions 182–252 are small ATPAse domain (RuvB-S); that stretch reads TPQELAQIIT…RTQKALEALG (71 aa). The segment at 255–335 is head domain (RuvB-H); sequence ERGFDELDLK…LTPNIQNSLF (81 aa). Residues arginine 309 and arginine 314 each contribute to the DNA site.

It belongs to the RuvB family. In terms of assembly, homohexamer. Forms an RuvA(8)-RuvB(12)-Holliday junction (HJ) complex. HJ DNA is sandwiched between 2 RuvA tetramers; dsDNA enters through RuvA and exits via RuvB. An RuvB hexamer assembles on each DNA strand where it exits the tetramer. Each RuvB hexamer is contacted by two RuvA subunits (via domain III) on 2 adjacent RuvB subunits; this complex drives branch migration. In the full resolvosome a probable DNA-RuvA(4)-RuvB(12)-RuvC(2) complex forms which resolves the HJ.

The protein resides in the cytoplasm. The catalysed reaction is ATP + H2O = ADP + phosphate + H(+). Functionally, the RuvA-RuvB-RuvC complex processes Holliday junction (HJ) DNA during genetic recombination and DNA repair, while the RuvA-RuvB complex plays an important role in the rescue of blocked DNA replication forks via replication fork reversal (RFR). RuvA specifically binds to HJ cruciform DNA, conferring on it an open structure. The RuvB hexamer acts as an ATP-dependent pump, pulling dsDNA into and through the RuvAB complex. RuvB forms 2 homohexamers on either side of HJ DNA bound by 1 or 2 RuvA tetramers; 4 subunits per hexamer contact DNA at a time. Coordinated motions by a converter formed by DNA-disengaged RuvB subunits stimulates ATP hydrolysis and nucleotide exchange. Immobilization of the converter enables RuvB to convert the ATP-contained energy into a lever motion, pulling 2 nucleotides of DNA out of the RuvA tetramer per ATP hydrolyzed, thus driving DNA branch migration. The RuvB motors rotate together with the DNA substrate, which together with the progressing nucleotide cycle form the mechanistic basis for DNA recombination by continuous HJ branch migration. Branch migration allows RuvC to scan DNA until it finds its consensus sequence, where it cleaves and resolves cruciform DNA. This chain is Holliday junction branch migration complex subunit RuvB, found in Nitratiruptor sp. (strain SB155-2).